Consider the following 298-residue polypeptide: MSNAREIRSKVQSVKNTQKITGAMELVAASKMRGAIVKMNNVRPYVESANTIIKNVTMASIDYPNPYLFDREVKRVGYIVTSTDRGLCGGLNINLFKHVLKDIKKNLDDRVEVDVCAIGSKAATFFAKLIDVNVVATAHYNDKDNEGSIRAIRGALKVMLDRFTNGEIDRLYMSSNQFVSTIKQKPKLQTLLPIQDIFSKEELKTNKEQASKGHWDYIYERDIEEVLNALCIRYIEAQVRGAILENAACEQAARMMAMKNATDNASDIIDQLKLDYNKVRQAMITQELAEICSGAAAV.

Belongs to the ATPase gamma chain family. As to quaternary structure, F-type ATPases have 2 components, CF(1) - the catalytic core - and CF(0) - the membrane proton channel. CF(1) has five subunits: alpha(3), beta(3), gamma(1), delta(1), epsilon(1). CF(0) has three main subunits: a, b and c.

The protein resides in the cell inner membrane. Functionally, produces ATP from ADP in the presence of a proton gradient across the membrane. The gamma chain is believed to be important in regulating ATPase activity and the flow of protons through the CF(0) complex. This is ATP synthase gamma chain from Francisella philomiragia subsp. philomiragia (strain ATCC 25017 / CCUG 19701 / FSC 153 / O#319-036).